The primary structure comprises 89 residues: UPF0297 protein MGAS9429_Spy1808 (89 aa).

This sequence belongs to the UPF0297 family.

This chain is UPF0297 protein MGAS9429_Spy1808, found in Streptococcus pyogenes serotype M12 (strain MGAS9429).